Consider the following 510-residue polypeptide: Alpha-L-arabinofuranosidase B (510 aa).

An N-terminal signal peptide occupies residues 1–24 (MTMSRSSRSSVLALALATGSLVAA). Residues 25–342 (GPCDIYSSGG…ADIVAAKYAT (318 aa)) form a catalytic region. 3 cysteine pairs are disulfide-bonded: cysteine 27-cysteine 37, cysteine 87-cysteine 92, and cysteine 182-cysteine 183. An N-linked (GlcNAc...) asparagine glycan is attached at asparagine 89. Aspartate 225 serves as a coordination point for substrate. The active-site Nucleophile is glutamate 227. 2 residues coordinate substrate: asparagine 228 and glycine 303. The active-site Proton donor is aspartate 304. The interval 343–510 (TSLISGPALT…VSWVVADGFA (168 aa)) is ABD. The cysteines at positions 412 and 450 are disulfide-linked. Histidine 427, asparagine 429, phenylalanine 430, aspartate 446, histidine 475, glutamate 477, leucine 480, and aspartate 500 together coordinate substrate.

This sequence belongs to the glycosyl hydrolase 54 family.

Its subcellular location is the secreted. The enzyme catalyses Hydrolysis of terminal non-reducing alpha-L-arabinofuranoside residues in alpha-L-arabinosides.. It participates in glycan metabolism; L-arabinan degradation. Its function is as follows. Alpha-L-arabinofuranosidase involved in the degradation of arabinoxylan, a major component of plant hemicellulose. Able to hydrolyze 1,5-, 1,3- and 1,2-alpha-linkages not only in L-arabinofuranosyl oligosaccharides, but also in polysaccharides containing terminal non-reducing L-arabinofuranoses in side chains, like L-arabinan, arabinogalactan and arabinoxylan. The chain is Alpha-L-arabinofuranosidase B (abfB) from Emericella nidulans (strain FGSC A4 / ATCC 38163 / CBS 112.46 / NRRL 194 / M139) (Aspergillus nidulans).